The following is a 318-amino-acid chain: Methionyl-tRNA formyltransferase (318 aa).

(6S)-5,6,7,8-tetrahydrofolate is bound at residue 112–115; the sequence is SILP.

Belongs to the Fmt family.

It catalyses the reaction L-methionyl-tRNA(fMet) + (6R)-10-formyltetrahydrofolate = N-formyl-L-methionyl-tRNA(fMet) + (6S)-5,6,7,8-tetrahydrofolate + H(+). In terms of biological role, attaches a formyl group to the free amino group of methionyl-tRNA(fMet). The formyl group appears to play a dual role in the initiator identity of N-formylmethionyl-tRNA by promoting its recognition by IF2 and preventing the misappropriation of this tRNA by the elongation apparatus. The protein is Methionyl-tRNA formyltransferase of Haemophilus influenzae (strain PittEE).